The following is a 588-amino-acid chain: Protein decapentaplegic (588 aa).

Positions 1–23 are cleaved as a signal peptide; the sequence is MRAWLLLLAVLATFQTIVRVAST. Residues 24–456 constitute a propeptide that is removed on maturation; that stretch reads EDISQRFIAA…DGRHKARSIR (433 aa). A disordered region spans residues 74–169; the sequence is FSEPASFSDS…STESHQSSSI (96 aa). Over residues 96–119 the composition is skewed to basic and acidic residues; the sequence is SKSDANRQFNEVHKPRTDQLENSK. An N-linked (GlcNAc...) asparagine glycan is attached at asparagine 120. Positions 140–153 are enriched in basic residues; that stretch reads RSHHKKSHHHRSHQ. The span at 156-169 shows a compositional bias: low complexity; the sequence is QASASTESHQSSSI. Asparagine 342 and asparagine 377 each carry an N-linked (GlcNAc...) asparagine glycan. Positions 454–484 are disordered; the sequence is SIRDVSGGEGGGKGGRNKRQPRRPTRRKNHD. Positions 468–481 are enriched in basic residues; that stretch reads GRNKRQPRRPTRRK. Cystine bridges form between cysteine 487–cysteine 553, cysteine 516–cysteine 585, and cysteine 520–cysteine 587. Asparagine 529 is a glycosylation site (N-linked (GlcNAc...) asparagine).

The protein belongs to the TGF-beta family. In terms of assembly, heterodimers of scw/dpp are the active subunit, dpp/dpp homodimers elicit a basal response and scw/scw homodimers alone are ineffective in specifying a dorsal pattern. Component of a complex composed of dpp, sog and tsg. Interacts with nord and gbb; the interaction interferes with dpp secretion. As to expression, expressed in the dorsal region of the embryo, and becomes enriched in a dorsal midline stripe just prior to gastrulation. Expressed in midgut mesoderm and in two overlapping regions of the embryonic large intestine. Expressed in a long-range concentration gradient in the wing imaginal disk.

The protein localises to the secreted. In terms of biological role, required during oogenesis for eggshell patterning and dorsal/ventral patterning of the embryo. Acts as a morphogen during embryogenesis to pattern the dorsal/ventral axis, specifying dorsal ectoderm and amnioserosa cell fate within the dorsal half of the embryo; this activity is antagonized by binding to sog and tsg. Induces the formation of visceral mesoderm and the heart in early embryos. Required later in embryogenesis for dorsal closure and patterning of the hindgut. Also functions postembryonically as a long-range morphogen during imaginal disk development; is responsible for the progression of the morphogenetic furrow during eye development. Patterns the wing imaginal disk along its anterior/posterior axis and has a role in positioning pro-veins. Also required to subdivide the wing disk along the proximal/distal axis into body wall (notum) and wing. Ensures the correct architecture of wing epithelial cells. Has multiple roles in the developing tracheal system, controlling directed tracheal cell migration during embryogenesis and later specifying the fate of fusion cells in the tracheal branches. Required for viability of larvae. Essential for the maintenance and division of germline stem cells in the ovary. Signals via the type I receptor tkv, the type II receptor punt, and in some tissues via the type I receptor sax, in a signaling cascade that leads to activation and repression of target genes. The protein is Protein decapentaplegic (dpp) of Drosophila melanogaster (Fruit fly).